The chain runs to 377 residues: Glutamate 5-kinase (377 aa).

Residue K20 participates in ATP binding. Substrate is bound by residues S60, D147, and N159. 179–180 provides a ligand contact to ATP; it reads TD. Residues 285–363 form the PUA domain; it reads AGRLVIDDGA…DKVYQVLGEA (79 aa).

This sequence belongs to the glutamate 5-kinase family.

The protein resides in the cytoplasm. The catalysed reaction is L-glutamate + ATP = L-glutamyl 5-phosphate + ADP. Its pathway is amino-acid biosynthesis; L-proline biosynthesis; L-glutamate 5-semialdehyde from L-glutamate: step 1/2. In terms of biological role, catalyzes the transfer of a phosphate group to glutamate to form L-glutamate 5-phosphate. The protein is Glutamate 5-kinase of Acinetobacter baumannii (strain AB307-0294).